Here is a 245-residue protein sequence, read N- to C-terminus: D-aminoacyl-tRNA deacylase (245 aa).

The protein belongs to the DtdA deacylase family. As to quaternary structure, monomer. Zn(2+) is required as a cofactor.

It catalyses the reaction a D-aminoacyl-tRNA + H2O = a tRNA + a D-alpha-amino acid + H(+). The enzyme catalyses glycyl-tRNA(Ala) + H2O = tRNA(Ala) + glycine + H(+). Functionally, D-aminoacyl-tRNA deacylase with broad substrate specificity. By recycling D-aminoacyl-tRNA to D-amino acids and free tRNA molecules, this enzyme counteracts the toxicity associated with the formation of D-aminoacyl-tRNA entities in vivo. This Ignicoccus hospitalis (strain KIN4/I / DSM 18386 / JCM 14125) protein is D-aminoacyl-tRNA deacylase.